The following is a 293-amino-acid chain: Glutamyl-Q tRNA(Asp) synthetase (293 aa).

L-glutamate is bound by residues 8–12 (RFAPT) and glutamate 44. The short motif at 11–21 (PTPSGYLHFGS) is the 'HIGH' region element. The Zn(2+) site is built by cysteine 100, cysteine 102, tyrosine 114, and cysteine 118. Tyrosine 171 and arginine 189 together coordinate L-glutamate. The 'KMSKS' region motif lies at 227–231 (KLGKS). ATP is bound at residue lysine 230.

This sequence belongs to the class-I aminoacyl-tRNA synthetase family. GluQ subfamily. Zn(2+) serves as cofactor.

Its function is as follows. Catalyzes the tRNA-independent activation of glutamate in presence of ATP and the subsequent transfer of glutamate onto a tRNA(Asp). Glutamate is transferred on the 2-amino-5-(4,5-dihydroxy-2-cyclopenten-1-yl) moiety of the queuosine in the wobble position of the QUC anticodon. The protein is Glutamyl-Q tRNA(Asp) synthetase of Pseudomonas aeruginosa (strain LESB58).